The primary structure comprises 301 residues: Ribosome-inactivating protein (301 aa).

The propeptide at 1–16 (MAEITLEPSDLMAQTN) is or 12 (in 10% of the molecules). Positions 162–186 (MATLEEEEVKMQMQMPEAADLAAAA) are excised as a propeptide. Residue glutamate 207 is part of the active site. Residues 258–301 (VIPDMQKLGIKDKNEAARIVALVKNQTTAAAATAASADNDDDEA) constitute a propeptide that is removed on maturation.

The protein belongs to the ribosome-inactivating protein family. Type 1 RIP subfamily. Synthesized and stored in the kernel as a 34 kDa inactive precursor. During germination, this neutral precursor is converted into a basic, active form by limited proteolysis, which removes 25 AA of net charge -6 from the center of the polypeptide chain. Additional processing also occurs at the N- and C-termini of the polypeptide. A two-chain active RIP (comprised of 16.5 and 8.5 kDa fragments that remain tightly associated) is produced from this processing event.

The catalysed reaction is Endohydrolysis of the N-glycosidic bond at one specific adenosine on the 28S rRNA.. Functionally, potent catalytic inactivator of eukaryotic protein synthesis. It may be a component of natural defense mechanisms involved in protecting the kernel against soil-borne fungal infections. This chain is Ribosome-inactivating protein, found in Zea mays (Maize).